Consider the following 424-residue polypeptide: 3-phosphoshikimate 1-carboxyvinyltransferase (424 aa).

3-phosphoshikimate-binding residues include Lys21, Ser22, and Arg26. Lys21 is a phosphoenolpyruvate binding site. Gly92 and Arg120 together coordinate phosphoenolpyruvate. 3-phosphoshikimate contacts are provided by Ser163, Ser164, Gln165, Ser191, Asp306, and Lys333. Gln165 provides a ligand contact to phosphoenolpyruvate. Asp306 serves as the catalytic Proton acceptor. Residues Arg337, Arg379, and Lys405 each contribute to the phosphoenolpyruvate site.

It belongs to the EPSP synthase family. In terms of assembly, monomer.

It localises to the cytoplasm. The enzyme catalyses 3-phosphoshikimate + phosphoenolpyruvate = 5-O-(1-carboxyvinyl)-3-phosphoshikimate + phosphate. The protein operates within metabolic intermediate biosynthesis; chorismate biosynthesis; chorismate from D-erythrose 4-phosphate and phosphoenolpyruvate: step 6/7. Its function is as follows. Catalyzes the transfer of the enolpyruvyl moiety of phosphoenolpyruvate (PEP) to the 5-hydroxyl of shikimate-3-phosphate (S3P) to produce enolpyruvyl shikimate-3-phosphate and inorganic phosphate. The chain is 3-phosphoshikimate 1-carboxyvinyltransferase from Clostridium perfringens (strain SM101 / Type A).